Reading from the N-terminus, the 240-residue chain is Ribonuclease HII (240 aa).

The RNase H type-2 domain maps to 33-222 (GPVAGVDEVG…VRRIVTRSNT (190 aa)). The a divalent metal cation site is built by D39, E40, and D131.

It belongs to the RNase HII family. Mn(2+) is required as a cofactor. Mg(2+) serves as cofactor.

The protein localises to the cytoplasm. The enzyme catalyses Endonucleolytic cleavage to 5'-phosphomonoester.. Functionally, endonuclease that specifically degrades the RNA of RNA-DNA hybrids. The protein is Ribonuclease HII of Mycobacterium leprae (strain Br4923).